We begin with the raw amino-acid sequence, 434 residues long: Asparagine--tRNA ligase (434 aa).

The protein belongs to the class-II aminoacyl-tRNA synthetase family. Homodimer.

The protein resides in the cytoplasm. It carries out the reaction tRNA(Asn) + L-asparagine + ATP = L-asparaginyl-tRNA(Asn) + AMP + diphosphate + H(+). This chain is Asparagine--tRNA ligase, found in Oenococcus oeni (strain ATCC BAA-331 / PSU-1).